The following is a 478-amino-acid chain: Cytochrome c-552 (478 aa).

Residues 1 to 26 (MTRIKINARRIFSLLIPFFFFTSVHA) form the signal peptide. Residue histidine 94 coordinates heme c. Heme-binding residues include cysteine 122, cysteine 125, and lysine 126. Heme c contacts are provided by cysteine 160, cysteine 163, histidine 164, cysteine 209, cysteine 212, and histidine 213. The Ca(2+) site is built by glutamate 215, tyrosine 216, lysine 261, and glutamine 263. Tyrosine 216 contributes to the substrate binding site. Histidine 264 is a substrate binding site. Heme c contacts are provided by histidine 275, cysteine 282, cysteine 285, histidine 286, histidine 301, cysteine 314, cysteine 317, histidine 318, and histidine 393.

This sequence belongs to the cytochrome c-552 family. The cofactor is Ca(2+). Requires heme c as cofactor.

The protein localises to the periplasm. It catalyses the reaction 6 Fe(III)-[cytochrome c] + NH4(+) + 2 H2O = 6 Fe(II)-[cytochrome c] + nitrite + 8 H(+). It participates in nitrogen metabolism; nitrate reduction (assimilation). Functionally, catalyzes the reduction of nitrite to ammonia, consuming six electrons in the process. The polypeptide is Cytochrome c-552 (Escherichia coli O9:H4 (strain HS)).